The primary structure comprises 357 residues: MKVDPNKEKALAAVLSQIEKQFGKGSIMKLGEDRSMDVETISTGSLSLDVALGAGGLPMGRIVEIYGPESSGKTTLTLEVIAAAQREGKTCAFIDAEHALDPIYAKKLGVDIDNLLCSQPDTGEQALEICDALTRSGAVDVIVVDSVAALTPKAEIEGEIGDSHMGLAARMMSQAMRKLAGNLKQSNTLLIFINQIRMKIGVMFGNPETTTGGNALKFYASVRLDIRRTGAIKDGDEVVGNETRVKVVKNKVAAPFKQAEFQILYGQGINRTGELVDLGVAHKLIEKAGAWYSYKGDKIGQGRANAGKYLTENPAIAAEIDKTLRELLLSNPSALASSASDDESTEGNIDLETGEIF.

67-74 serves as a coordination point for ATP; it reads GPESSGKT. The segment at 335–357 is disordered; that stretch reads LASSASDDESTEGNIDLETGEIF.

The protein belongs to the RecA family.

It localises to the cytoplasm. In terms of biological role, can catalyze the hydrolysis of ATP in the presence of single-stranded DNA, the ATP-dependent uptake of single-stranded DNA by duplex DNA, and the ATP-dependent hybridization of homologous single-stranded DNAs. It interacts with LexA causing its activation and leading to its autocatalytic cleavage. The chain is Protein RecA from Shewanella putrefaciens (strain CN-32 / ATCC BAA-453).